The chain runs to 325 residues: Plasminogen (325 aa).

Kringle domains follow at residues 80–146 (ACVK…VPSC) and 159–217 (LTPA…VLSV). 4 disulfides stabilise this stretch: Cys81-Cys146, Cys102-Cys135, Cys124-Cys141, and Cys188-Cys212.

It belongs to the peptidase S1 family. Plasminogen subfamily.

The protein localises to the secreted. It carries out the reaction Preferential cleavage: Lys-|-Xaa &gt; Arg-|-Xaa, higher selectivity than trypsin. Converts fibrin into soluble products.. Functionally, plasmin dissolves the fibrin of blood clots and acts as a proteolytic factor in a variety of other processes including embryonic development, tissue remodeling, tumor invasion, and inflammation. The chain is Plasminogen from Petromyzon marinus (Sea lamprey).